We begin with the raw amino-acid sequence, 613 residues long: Ribosome-associated molecular chaperone SSB1 (613 aa).

Residues 1-391 form a nucleotide binding domain (NBD) region; sequence MAEGVFQGAI…ILTGQSTSED (391 aa). ATP contacts are provided by residues 16 to 18, lysine 73, 205 to 207, 271 to 278, and glycine 342; these read TTY, GGT, and ERAKRTLS. Residues 392-402 form an inter-domain linker region; sequence TKDLLLLDVAP. The substrate binding domain (SBD) stretch occupies residues 403–613; the sequence is LSLGVGMQGD…RVVTKAMSSR (211 aa). The segment at 516-612 is lid domain (SBDalpha); it reads SDEIEKMVNQ…KRVVTKAMSS (97 aa). A Nuclear export signal motif is present at residues 574 to 582; sequence IESALSDAL.

This sequence belongs to the heat shock protein 70 family. Ssb-type Hsp70 subfamily. Binds to ribosomes. Binds close to the ribosomal tunnel exit via contacts with both ribosomal proteins and rRNA. Directly interacts with nascent polypeptides. This interaction is dependent on the ribosome-associated complex (RAC). Interacts with SSE1. Interacts with FES1.

It is found in the cytoplasm. It catalyses the reaction ATP + H2O = ADP + phosphate + H(+). In terms of biological role, ribosome-bound, Hsp70-type chaperone that assists in the cotranslational folding of newly synthesized proteins in the cytosol. Stimulates folding by interacting with nascent chains, binding to short, largely hydrophobic sequences exposed by unfolded proteins, thereby stabilizing longer, more slowly translated, and aggregation-prone nascent polypeptides and domains that cannot fold stably until fully synthesized. The Hsp70-protein substrate interaction depends on ATP-binding and on allosteric regulation between the NBD and the SBD. The ATP-bound state is characterized by a fast exchange rate of substrate (low affinity state), while in the ADP-bound state exchange is much slower (high affinity state). During the Hsp70 cycle, the chaperone switches between the ATP-bound state (open conformation) and the ADP-bound state (closed conformation) by major conformational rearrangements involving mainly the lid domain. Ssb cooperates with a specific Hsp40/Hsp70 co-chaperone termed the ribosome-associated complex (RAC), which stimulates the ATPase activity of the ribosome-associated pool of Ssbs and switches it to the high affinity substrate binding state. Hsp110 chaperone SSE1 and FES1 act as nucleotide exchange factors that cause substrate release. This chain is Ribosome-associated molecular chaperone SSB1 (SSB1), found in Zygosaccharomyces rouxii (strain ATCC 2623 / CBS 732 / NBRC 1130 / NCYC 568 / NRRL Y-229).